Here is a 161-residue protein sequence, read N- to C-terminus: uncharacterized protein (161 aa).

This is an uncharacterized protein from Saccharomyces cerevisiae (strain ATCC 204508 / S288c) (Baker's yeast).